The following is a 948-amino-acid chain: Coatomer subunit beta-1 (948 aa).

HEAT repeat units follow at residues 49 to 87 (ETIP…TDSK), 92 to 126 (PEMI…MKET), 127 to 164 (EIVE…LPQG), 274 to 311 (TAIR…TLHR), 312 to 349 (DIMV…HHNI), and 391 to 428 (EVAS…TNPK).

In terms of assembly, oligomeric complex that consists of at least the alpha, beta, beta', gamma, delta, epsilon and zeta subunits.

It is found in the cytoplasm. The protein resides in the golgi apparatus membrane. The protein localises to the cytoplasmic vesicle. Its subcellular location is the COPI-coated vesicle membrane. Functionally, the coatomer is a cytosolic protein complex that binds to dilysine motifs and reversibly associates with Golgi non-clathrin-coated vesicles, which further mediate biosynthetic protein transport from the ER, via the Golgi up to the trans Golgi network. Coatomer complex is required for budding from Golgi membranes, and is essential for the retrograde Golgi-to-ER transport of dilysine-tagged proteins. The sequence is that of Coatomer subunit beta-1 from Arabidopsis thaliana (Mouse-ear cress).